The sequence spans 114 residues: Small ribosomal subunit protein uS13m (114 aa).

The tract at residues 92–114 is disordered; that stretch reads DGLPLRGQRSHTNARTSRKRIRK.

It belongs to the universal ribosomal protein uS13 family. Part of the small ribosomal subunit.

It localises to the mitochondrion. In terms of biological role, located at the top of the head of the small subunit, it contacts several helices of the 18S rRNA. This is Small ribosomal subunit protein uS13m (RPS13) from Oenothera berteroana (Bertero's evening primrose).